Consider the following 174-residue polypeptide: Cytochrome c-550-like protein (174 aa).

A signal peptide spans 1 to 37 (MPGQTQGAKRWRVPGRGWRWAGILLLVWLGLASPAAG). Positions 82, 85, 86, and 136 each coordinate heme c.

The protein belongs to the cytochrome c family. PsbV subfamily. The cofactor is heme c.

The protein localises to the cellular thylakoid membrane. Functionally, possible low-potential cytochrome c. This is Cytochrome c-550-like protein (psbV2) from Synechococcus sp. (strain JA-3-3Ab) (Cyanobacteria bacterium Yellowstone A-Prime).